Reading from the N-terminus, the 418-residue chain is Voltage-gated ClC-type chloride channel ClcB (418 aa).

The next 10 membrane-spanning stretches (helical) occupy residues 5–25 (LLIATVVGILAAFAVAGFRHA), 54–74 (LLTPALGGLAAGLLLMGWQKF), 146–166 (LWIACGAAAGMAAAYRAPLAG), 168–188 (LFIAEVLFGTMMLASLGPVII), 222–242 (ALIISTGVLAGLCGPLLLTLM), 258–278 (WQLALGGLIVGLLSLFTPAVW), 291–311 (APPLLMIIAGIFLCKLCAVLA), 316–336 (GAPGGVFTPTLFIGLAIGMLY), 352–372 (LLLGLTGMATLLAATTHAPIM), and 380–400 (MTGEYQLLPGLLIACVIASVI).

This sequence belongs to the chloride channel (TC 2.A.49) family. ClcB subfamily.

It localises to the cell inner membrane. Functionally, probably acts as an electrical shunt for an outwardly-directed proton pump that is linked to amino acid decarboxylation, as part of the extreme acid resistance (XAR) response. The polypeptide is Voltage-gated ClC-type chloride channel ClcB (Escherichia coli O127:H6 (strain E2348/69 / EPEC)).